Consider the following 534-residue polypeptide: Cytochrome c oxidase subunit 1 (534 aa).

Topologically, residues 1–14 are mitochondrial matrix; the sequence is MVQRWLYSTNAKDI. A helical membrane pass occupies residues 15-39; it reads AVLYFMLAIFSGMAGTAMSLIIRLE. Ca(2+) contacts are provided by E39, A42, and G44. Topologically, residues 40-54 are mitochondrial intermembrane; it reads LAAPGSQYLHGNSQL. A helical membrane pass occupies residues 55-88; it reads FNVLVVGHAVLMIFFLVMPALIGGFGNYLLPLMI. Residue H62 coordinates Fe(II)-heme a. Topologically, residues 89 to 97 are mitochondrial matrix; it reads GATDTAFPR. A helical membrane pass occupies residues 98–118; the sequence is INNIAFWVLPMGLVCLVTSTL. Residues 119-142 lie on the Mitochondrial intermembrane side of the membrane; it reads VESGAGTGWTVYPPLSSIQAHSGP. Residues 143-171 traverse the membrane as a helical segment; that stretch reads SVDLAIFALHLTSISSLLGAINFIVTTLN. At 172–183 the chain is on the mitochondrial matrix side; sequence MRTNGMTMHKLP. A helical transmembrane segment spans residues 184-215; that stretch reads LFVWSIFITAFLLLLSLPVLSAGITMLLLDRN. The Mitochondrial intermembrane portion of the chain corresponds to 216 to 228; sequence FNTSFFEVSGGGD. A helical transmembrane segment spans residues 229–263; that stretch reads PILYEHLFWFFGHPEVYILIIPGFGIISHVVSTYS. H241 provides a ligand contact to Cu cation. Positions 241 to 245 form a cross-link, 1'-histidyl-3'-tyrosine (His-Tyr); that stretch reads HPEVY. Y245 contacts O2. Topologically, residues 264 to 269 are mitochondrial matrix; sequence KKPVFG. The helical transmembrane segment at 270–295 threads the bilayer; that stretch reads EISMVYAMASIGLLGFLVWSHHMYIV. Residues H290 and H291 each coordinate Cu cation. Over 296–298 the chain is Mitochondrial intermembrane; that stretch reads GLD. Residues 299 to 327 form a helical membrane-spanning segment; the sequence is ADTRAYFTSATMIIAIPTGIKIFSWLATI. Topologically, residues 328 to 335 are mitochondrial matrix; sequence HGGSIRLA. Residues 336-358 traverse the membrane as a helical segment; it reads TPMLYAIAFLFLFTMGGLTGVAL. The Mitochondrial intermembrane portion of the chain corresponds to 359 to 370; that stretch reads ANASLDVAFHDT. Mg(2+)-binding residues include H368 and D369. The chain crosses the membrane as a helical span at residues 371 to 400; sequence YYVVGHFHYVLSMGAIFSLFAGYYYWSPQI. Position 376 (H376) interacts with heme a3. Residue H378 coordinates Fe(II)-heme a. The Mitochondrial matrix portion of the chain corresponds to 401 to 406; sequence LGLNYN. A helical membrane pass occupies residues 407–431; that stretch reads EKLAQIQFWLIFIGANVIFFPMHFL. Residues 432–449 lie on the Mitochondrial intermembrane side of the membrane; it reads GINGMPRRIPDYPDAFAG. P441 contacts Ca(2+). Residues 450–474 form a helical membrane-spanning segment; it reads WNYVASIGSFIATLSLFLFIYILYD. Topologically, residues 475 to 534 are mitochondrial matrix; that stretch reads QLVNGLNNKVNNKSVIYNKAPDFVESNTIFNLNTVKSSSIEFLLTSPPAVHSFNTPAVQS.

It belongs to the heme-copper respiratory oxidase family. As to quaternary structure, component of the cytochrome c oxidase (complex IV, CIV), a multisubunit enzyme composed of 12 subunits. The complex is composed of a catalytic core of 3 subunits COX1, COX2 and COX3, encoded in the mitochondrial DNA, and 9 supernumerary subunits COX4, COX5A (or COX5B), COX6, COX7, COX8, COX9, COX12, COX13 and COX26, which are encoded in the nuclear genome. The complex exists as a monomer or a dimer and forms supercomplexes (SCs) in the inner mitochondrial membrane with a dimer of ubiquinol-cytochrome c oxidoreductase (cytochrome b-c1 complex, complex III, CIII), resulting in 2 different assemblies (supercomplexes III(2)IV and III(2)IV(2)). Heme is required as a cofactor. The cofactor is Cu cation. In terms of processing, the N-terminus is blocked.

The protein localises to the mitochondrion inner membrane. The catalysed reaction is 4 Fe(II)-[cytochrome c] + O2 + 8 H(+)(in) = 4 Fe(III)-[cytochrome c] + 2 H2O + 4 H(+)(out). It functions in the pathway energy metabolism; oxidative phosphorylation. Component of the cytochrome c oxidase, the last enzyme in the mitochondrial electron transport chain which drives oxidative phosphorylation. The respiratory chain contains 3 multisubunit complexes succinate dehydrogenase (complex II, CII), ubiquinol-cytochrome c oxidoreductase (cytochrome b-c1 complex, complex III, CIII) and cytochrome c oxidase (complex IV, CIV), that cooperate to transfer electrons derived from NADH and succinate to molecular oxygen, creating an electrochemical gradient over the inner membrane that drives transmembrane transport and the ATP synthase. Cytochrome c oxidase is the component of the respiratory chain that catalyzes the reduction of oxygen to water. Electrons originating from reduced cytochrome c in the intermembrane space (IMS) are transferred via the dinuclear copper A center (CU(A)) of COX2 and heme A of COX1 to the active site in COX1, a binuclear center (BNC) formed by heme A3 and copper B (CU(B)). The BNC reduces molecular oxygen to 2 water molecules using 4 electrons from cytochrome c in the IMS and 4 protons from the mitochondrial matrix. COX1 is a catalytic core subunit containing heme A and the active site BNC with heme A3 and the copper atom CU(B). The chain is Cytochrome c oxidase subunit 1 (COX1) from Saccharomyces cerevisiae (strain ATCC 204508 / S288c) (Baker's yeast).